A 227-amino-acid polypeptide reads, in one-letter code: Cytochrome c oxidase subunit 2 (227 aa).

Residues 1 to 26 (MNTWMNFNLQNSNSPLMEQLMFFHNH) lie on the Mitochondrial intermembrane side of the membrane. Residues 27 to 48 (SMLIILLITILVGYIMSSLLYN) form a helical membrane-spanning segment. Over 49–62 (KLYNRYLLESQNVE) the chain is Mitochondrial matrix. Residues 63–82 (IIWTILPAFMLIFIALPSLR) form a helical membrane-spanning segment. The Mitochondrial intermembrane segment spans residues 83-227 (LLYLLDDSNS…SFIKWISSNS (145 aa)). Cu cation contacts are provided by His-161, Cys-196, Glu-198, Cys-200, His-204, and Met-207. Glu-198 is a binding site for Mg(2+).

The protein belongs to the cytochrome c oxidase subunit 2 family. Component of the cytochrome c oxidase (complex IV, CIV), a multisubunit enzyme composed of a catalytic core of 3 subunits and several supernumerary subunits. The complex exists as a monomer or a dimer and forms supercomplexes (SCs) in the inner mitochondrial membrane with ubiquinol-cytochrome c oxidoreductase (cytochrome b-c1 complex, complex III, CIII). Cu cation serves as cofactor.

The protein resides in the mitochondrion inner membrane. It carries out the reaction 4 Fe(II)-[cytochrome c] + O2 + 8 H(+)(in) = 4 Fe(III)-[cytochrome c] + 2 H2O + 4 H(+)(out). In terms of biological role, component of the cytochrome c oxidase, the last enzyme in the mitochondrial electron transport chain which drives oxidative phosphorylation. The respiratory chain contains 3 multisubunit complexes succinate dehydrogenase (complex II, CII), ubiquinol-cytochrome c oxidoreductase (cytochrome b-c1 complex, complex III, CIII) and cytochrome c oxidase (complex IV, CIV), that cooperate to transfer electrons derived from NADH and succinate to molecular oxygen, creating an electrochemical gradient over the inner membrane that drives transmembrane transport and the ATP synthase. Cytochrome c oxidase is the component of the respiratory chain that catalyzes the reduction of oxygen to water. Electrons originating from reduced cytochrome c in the intermembrane space (IMS) are transferred via the dinuclear copper A center (CU(A)) of subunit 2 and heme A of subunit 1 to the active site in subunit 1, a binuclear center (BNC) formed by heme A3 and copper B (CU(B)). The BNC reduces molecular oxygen to 2 water molecules using 4 electrons from cytochrome c in the IMS and 4 protons from the mitochondrial matrix. This Ctenocephalides felis (Cat flea) protein is Cytochrome c oxidase subunit 2 (COII).